The sequence spans 201 residues: Inner membrane protein YnbA (201 aa).

The Periplasmic portion of the chain corresponds to 1–43 (MTLYQIKPLFQSLLRPTMFWLYKHHVTANHITLAALALSLLTG). Residues 44 to 64 (LLLMLAAQPILFLLLPIVLFI) traverse the membrane as a helical segment. Topologically, residues 65 to 84 (RMALNALDGMLARECNQQTR) are cytoplasmic. The chain crosses the membrane as a helical span at residues 85–107 (LGAILNETGDVISDIALYLPFLF). Over 108-116 (LPESNASLV) the chain is Periplasmic. Residues 117–139 (ILMLFCTILTEFCGLLAQTINGV) traverse the membrane as a helical segment. Residues 140 to 151 (RSYAGPFGKSDR) lie on the Cytoplasmic side of the membrane. Residues 152-172 (ALIFGLWGLAVAIYPQWMQWN) form a helical membrane-spanning segment. At 173-175 (NLL) the chain is on the periplasmic side. A helical membrane pass occupies residues 176–196 (WSIASILLLWTAINRCRSVLL). Residues 197–201 (MSAEI) are Cytoplasmic-facing.

The protein resides in the cell inner membrane. In Escherichia coli (strain K12), this protein is Inner membrane protein YnbA (ynbA).